The primary structure comprises 417 residues: Peptidyl-Asp metalloendopeptidase (417 aa).

Residues 1–25 (MLSRSIGKAAGGLVLGLSVAAAAHA) form the signal peptide. His-327 serves as a coordination point for Zn(2+). Glu-328 is a catalytic residue. Residues His-331 and His-337 each coordinate Zn(2+).

The protein belongs to the peptidase M72 family. Zn(2+) serves as cofactor.

The enzyme catalyses Cleavage of Xaa-|-Asp, Xaa-|-Glu and Xaa-|-cysteic acid bonds.. Functionally, metalloprotease, specifically cleaves on the N-terminal side of aspartyl, glutamyl and cysteic acid residues. This is Peptidyl-Asp metalloendopeptidase from Stenotrophomonas maltophilia (strain K279a).